A 713-amino-acid polypeptide reads, in one-letter code: KNR4/SMI1 homolog (713 aa).

Disordered regions lie at residues 18-129 (PDRY…VTRD), 255-274 (IFIN…SPVA), 400-457 (RHQM…SKPA), and 500-713 (EPLE…KGKK). The segment covering 22 to 34 (ASQQRSSKASQSA) has biased composition (low complexity). Over residues 35–65 (GANSQNRPLYNNDDNQSEMYQASSSYTGGYT) the composition is skewed to polar residues. 2 stretches are compositionally biased toward low complexity: residues 66 to 81 (NSPS…GAAA) and 88 to 103 (SSRN…SSTS). Polar residues predominate over residues 260–270 (NAGSPNSSTPG). The segment covering 400-412 (RHQMQRREHERRQ) has biased composition (basic and acidic residues). Low complexity predominate over residues 413-429 (AAAAAQQQQQQQQHHAQ). 2 stretches are compositionally biased toward basic and acidic residues: residues 507 to 605 (EIKG…EEQK) and 613 to 662 (AKAE…KIDE). Acidic residues predominate over residues 663–686 (ENGNAEEADEEADDDDEDDEEEGD). The span at 701-713 (SKSKKKNKKKGKK) shows a compositional bias: basic residues.

The protein belongs to the KNR4/SMI1 family.

The polypeptide is KNR4/SMI1 homolog (Yarrowia lipolytica (strain CLIB 122 / E 150) (Yeast)).